Reading from the N-terminus, the 97-residue chain is Secreted Ly-6/uPAR domain-containing protein 2 (97 aa).

Positions 1–22 (MQLGTGLLLAAVLSLQLAAAEA) are cleaved as a signal peptide. 5 cysteine pairs are disulfide-bonded: cysteine 25/cysteine 47, cysteine 28/cysteine 34, cysteine 40/cysteine 68, cysteine 72/cysteine 88, and cysteine 89/cysteine 94. Residues 25–95 (CHQCTGFGGC…IACCQTSLCN (71 aa)) form the UPAR/Ly6 domain.

As to quaternary structure, interacts with CHRNA3, CHRNA4, CHRNA5, CHRNA7, CHRNB2 and CHRNB4. Interacts with CHRM1 and CHRM3 probably in an allosteric manner. As to expression, expressed at highest levels in cervix and esophagus, followed by adult and fetal skin. Expressed at lower levels in brain, lung, stomach, small intestine, colon, rectum, uterus, and thymus. Not detected in spleen nor bone marrow. Up-regulated 3-fold in psoriatic lesional skin. In the epidermis, predominantly produced by keratinocytes of the suprabasal epidermal compartment (at protein level). In attached gingiva, produced at highest levels by basal cells located in the lowermost epithelial layers (at protein level). Detected in serum (at protein level).

The protein resides in the secreted. In terms of biological role, binds and may modulate the functional properties of nicotinic and muscarinic acetylcholine receptors. May regulate keratinocytes proliferation, differentiation and apoptosis. In vitro moderately inhibits ACh-evoked currents of alpha-3:beta-2-containing nAChRs and strongly these of alpha-4:beta-2-containing nAChRs, modulates alpha-7-containing nAChRs, and inhibits nicotine-induced signaling probably implicating alpha-3:beta-4-containing nAChRs. Proposed to act on alpha-3:beta-2 and alpha-7 nAChRs in an orthosteric, and on mAChRs, such as CHRM1 and CHRM3, in an allosteric manner. This chain is Secreted Ly-6/uPAR domain-containing protein 2, found in Homo sapiens (Human).